A 98-amino-acid polypeptide reads, in one-letter code: Large ribosomal subunit protein mL53 (98 aa).

Belongs to the mitochondrion-specific ribosomal protein mL53 family. In terms of assembly, component of the mitochondrial large ribosomal subunit (mt-LSU). Mature yeast 74S mitochondrial ribosomes consist of a small (37S) and a large (54S) subunit. The 37S small subunit contains a 15S ribosomal RNA (15S mt-rRNA) and 34 different proteins. The 54S large subunit contains a 21S rRNA (21S mt-rRNA) and 46 different proteins.

Its subcellular location is the mitochondrion. In terms of biological role, component of the mitochondrial ribosome (mitoribosome), a dedicated translation machinery responsible for the synthesis of mitochondrial genome-encoded proteins, including at least some of the essential transmembrane subunits of the mitochondrial respiratory chain. The mitoribosomes are attached to the mitochondrial inner membrane and translation products are cotranslationally integrated into the membrane. The polypeptide is Large ribosomal subunit protein mL53 (MRPL44) (Saccharomyces cerevisiae (strain ATCC 204508 / S288c) (Baker's yeast)).